Here is a 249-residue protein sequence, read N- to C-terminus: ATP synthase subunit a, chloroplastic (249 aa).

Transmembrane regions (helical) follow at residues 40 to 60, 97 to 117, 136 to 156, 201 to 221, and 222 to 242; these read QVLI…VLAV, VPFI…GALL, INTT…AGLS, LVVV…VMFL, and GLFT…AYIG.

It belongs to the ATPase A chain family. In terms of assembly, F-type ATPases have 2 components, CF(1) - the catalytic core - and CF(0) - the membrane proton channel. CF(1) has five subunits: alpha(3), beta(3), gamma(1), delta(1), epsilon(1). CF(0) has four main subunits: a, b, b' and c.

The protein localises to the plastid. The protein resides in the chloroplast thylakoid membrane. In terms of biological role, key component of the proton channel; it plays a direct role in the translocation of protons across the membrane. The chain is ATP synthase subunit a, chloroplastic from Draba nemorosa (Woodland whitlowgrass).